The sequence spans 395 residues: Protein maternal effect lethal 26 (395 aa).

Residues 41-162 (KVQHTWTVKN…RDMIIVNVEI (122 aa)) enclose the MATH domain. In terms of domain architecture, BTB spans 201 to 269 (CDFAINVNGK…IYCGRCNKDI (69 aa)).

As to quaternary structure, interacts (via BTB domain) with cul-3. Seems to be a component of a E3 ubiquitin-protein ligase complex containing cul-3. Interacts (probably via MATH domain) with mei-1, which targets mei-1 for ubiquitin-mediated proteolysis. Interacts (probably via MATH domain) with ppfr-1, the regulatory subunit of the PP4 complex; targets ppfr-1 for ubiquitin-mediated proteolysis. May interact (via MATH domain) with unc-89 (via Ig-like C2-type domain 2/3 and, Ig-like C2-type domain 50 and fibronectin type-III domain 2). As to expression, expressed in body wall muscles.

It localises to the cytoplasm. The protein localises to the myofibril. It is found in the sarcomere. The protein resides in the m line. Its subcellular location is the i band. It functions in the pathway protein modification; protein ubiquitination. In terms of biological role, probable substrate-specific adapter of an E3 ubiquitin-protein ligase complex which mediates the ubiquitination and subsequent proteasomal degradation of target proteins. Controls degradation of microtubule severing protein mei-1 after meiosis. Controls degradation of ppfr-1, the regulatory subunit of PP4 complex, after meiosis. In body wall muscles, involved in the organization of myosin thick filaments, likely by regulating the degradation of mei-1 downstream of unc-89. May also activate the TORC1 pathway. The chain is Protein maternal effect lethal 26 (mel-26) from Caenorhabditis elegans.